Consider the following 47-residue polypeptide: MPEEVQTQDQPMETFAVQTFAFQAEIAQLMSLIYESLTDPSKLDSGK.

It belongs to the heat shock protein 90 family. As to quaternary structure, homodimer.

Its subcellular location is the cytoplasm. Its function is as follows. Putative molecular chaperone that may promote the maturation, structural maintenance and proper regulation of specific target proteins. In Oryctolagus cuniculus (Rabbit), this protein is Heat shock protein HSP 90.